We begin with the raw amino-acid sequence, 216 residues long: Ras-related protein Rab-5C (216 aa).

GTP is bound by residues Ser-30, Ala-31, Gly-33, Lys-34, Ser-35, Ser-36, His-47, Glu-48, Thr-53, Gly-79, Asn-134, Lys-135, Asp-137, Ala-165, and Lys-166. Ser-35 serves as a coordination point for Mg(2+). 2 short sequence motifs (switch) span residues 45–57 (QFHE…IGAA) and 78–94 (AGQE…YRGA). Thr-53 provides a ligand contact to Mg(2+). The interval 184–216 (KNEPQNAPGGPGRNRVVDLQESSQPSRSQCCSN) is disordered. A compositionally biased stretch (polar residues) spans 203 to 216 (QESSQPSRSQCCSN). 2 S-geranylgeranyl cysteine lipidation sites follow: Cys-213 and Cys-214.

It belongs to the small GTPase superfamily. Rab family. Mg(2+) is required as a cofactor. In terms of tissue distribution, detected in brain, ovary, rectum, small intestine, large intestine, liver, spleen, follicle and kidney (at protein level).

The protein resides in the cell membrane. It localises to the early endosome membrane. The catalysed reaction is GTP + H2O = GDP + phosphate + H(+). Regulated by guanine nucleotide exchange factors (GEFs) which promote the exchange of bound GDP for free GTP. Regulated by GTPase activating proteins (GAPs) which increase the GTP hydrolysis activity. Inhibited by GDP dissociation inhibitors (GDIs). The small GTPases Rab are key regulators of intracellular membrane trafficking, from the formation of transport vesicles to their fusion with membranes. Rabs cycle between an inactive GDP-bound form and an active GTP-bound form that is able to recruit to membranes different sets of downstream effectors directly responsible for vesicle formation, movement, tethering and fusion. The polypeptide is Ras-related protein Rab-5C (RAB5C) (Gallus gallus (Chicken)).